The chain runs to 37 residues: Large ribosomal subunit protein bL36c (37 aa).

Belongs to the bacterial ribosomal protein bL36 family.

The protein localises to the plastid. It is found in the chloroplast. The polypeptide is Large ribosomal subunit protein bL36c (rpl36) (Chlamydomonas reinhardtii (Chlamydomonas smithii)).